Consider the following 217-residue polypeptide: LexA repressor (217 aa).

A DNA-binding region (H-T-H motif) is located at residues 28 to 48 (RAEIAAEFGFSSPNAAEEHLR). Residues Ser-136 and Lys-173 each act as for autocatalytic cleavage activity in the active site.

It belongs to the peptidase S24 family. Homodimer.

The catalysed reaction is Hydrolysis of Ala-|-Gly bond in repressor LexA.. Its function is as follows. Represses a number of genes involved in the response to DNA damage (SOS response), including recA and lexA. In the presence of single-stranded DNA, RecA interacts with LexA causing an autocatalytic cleavage which disrupts the DNA-binding part of LexA, leading to derepression of the SOS regulon and eventually DNA repair. The polypeptide is LexA repressor (Cupriavidus necator (strain ATCC 17699 / DSM 428 / KCTC 22496 / NCIMB 10442 / H16 / Stanier 337) (Ralstonia eutropha)).